The primary structure comprises 282 residues: MEMO1 family protein Msm_1438 (282 aa).

This sequence belongs to the MEMO1 family.

In Methanobrevibacter smithii (strain ATCC 35061 / DSM 861 / OCM 144 / PS), this protein is MEMO1 family protein Msm_1438.